An 813-amino-acid chain; its full sequence is Histone acetyltransferase KAT2B (813 aa).

2 disordered regions span residues 1–55 (MAEA…GGSA) and 380–423 (NSTS…EAKR). Residues 32 to 46 (ASCGPATAVAAAGTA) show a composition bias toward low complexity. Over residues 380–391 (NSTSHEQINGGR) the composition is skewed to polar residues. Positions 406–423 (PGEKRKMNNSHAPEEAKR) are enriched in basic and acidic residues. An N-acetyltransferase domain is found at 484-632 (LNQKPNKKIL…GATLMGCELN (149 aa)). Glutamate 551 (proton donor/acceptor) is an active-site residue. Acetyl-CoA is bound by residues 555–557 (CAV), 562–568 (QVKGYGT), and 593–596 (YAIG). Residues 704 to 808 (KDPEQLYSTL…KFFFSKIKEA (105 aa)) enclose the Bromo domain.

The protein belongs to the acetyltransferase family. GCN5 subfamily. As to quaternary structure, interacts with BCAS3. Interacts with SIRT1. Interacts with EP300, CREBBP and DDX17. Component of a large chromatin remodeling complex, at least composed of MYSM1, KAT2B/PCAF, RBM10 and KIF11/TRIP5. Interacts with KLF1; the interaction does not acetylate KLF1 and there is no enhancement of its transactivational activity. Interacts with NFE4. Interacts with MECOM. Interacts with NR2C2 (hypophosphorylated and unsumoylated form); the interaction promotes the transactivation activity of NR2C2. Interacts with NFE4. Interacts with MECOM. Interacts with E2F1; the interaction acetylates E2F1 augmenting its DNA-binding and transcriptional activity. Interacts with NPAS2, BMAL1 and CLOCK. Interacts (unsumoylated form) with NR2C1; the interaction promotes transactivation activity. Interacts with CEBPB. Interacts with NR4A3. Interacts with TBX5. Interacts with PLK4. Interacts with RB1; this interaction leads to RB1 acetylation. Interacts with VRK1.

The protein resides in the nucleus. It is found in the cytoplasm. It localises to the cytoskeleton. The protein localises to the microtubule organizing center. Its subcellular location is the centrosome. The enzyme catalyses L-lysyl-[histone] + acetyl-CoA = N(6)-acetyl-L-lysyl-[histone] + CoA + H(+). It catalyses the reaction L-lysyl-[protein] + acetyl-CoA = N(6)-acetyl-L-lysyl-[protein] + CoA + H(+). The catalysed reaction is spermidine + acetyl-CoA = N(8)-acetylspermidine + CoA + H(+). In terms of biological role, functions as a histone acetyltransferase (HAT) to promote transcriptional activation. Has significant histone acetyltransferase activity with core histones (H3 and H4), and also with nucleosome core particles. Has a a strong preference for acetylation of H3 at 'Lys-9' (H3K9ac). Also acetylates non-histone proteins, such as ACLY, MAPRE1/EB1, PLK4, RRP9/U3-55K and TBX5. Acts as a circadian transcriptional coactivator which enhances the activity of the circadian transcriptional activators: NPAS2-BMAL1 and CLOCK-BMAL1 heterodimers. Involved in heart and limb development by mediating acetylation of TBX5, acetylation regulating nucleocytoplasmic shuttling of TBX5. Acts as a negative regulator of centrosome amplification by mediating acetylation of PLK4. Acetylates RRP9/U3-55K, a core subunit of the U3 snoRNP complex, impairing pre-rRNA processing. Acetylates MAPRE1/EB1, promoting dynamic kinetochore-microtubule interactions in early mitosis. Also acetylates spermidine. The chain is Histone acetyltransferase KAT2B from Mus musculus (Mouse).